A 495-amino-acid polypeptide reads, in one-letter code: MAAVADSVENNGSINLPENENLIPAGFSAAALLDENSGAFPELNQPDSLAAAETTFPDTNDSAEERWPGWPGDCVFRMIVPVTKVGAIIGRKGDFIKKMCEETRARIKVLDGPVNTPDRIVLISGKEEPEAYMSPAMDAVLRVFRRVSGLPDNDDDDVQNAGSVFSSVRLLVASTQAINLIGKQGSLIKSIVENSGASVRILSEEETPFYAAQDERIVDLQGEALKILKALEAIVGHLRRFLVDHTVVPLFEKQYLARVSQTRQEEPLAESKSSLHTISSNLMEPDFSLLARREPLFLERDSRVDSRVQPSGVSIYSQDPVLSARHSPGLARVSSAFVTQVSQTMQIPFSYAEDIIGVEGANIAYIRRRSGATITIKESPHPDQITVEIKGTTSQVQTAEQLIQEFIINHKEPVSVSGGYARIDSGYVPAYPPQLSNRQEPLPSTYMGTEPVQYRPTAYSQLGGPSTYTPTLTGQTYGSEYRPASDVGGYSSYNL.

KH domains lie at 73 to 140 (DCVF…MDAV), 165 to 234 (FSSV…LEAI), and 340 to 403 (QVSQ…EQLI). The segment at 474 to 495 (GQTYGSEYRPASDVGGYSSYNL) is disordered.

As to quaternary structure, interacts with HUA1 and HEN4. In terms of tissue distribution, detected in roots, shoots, leaves, flowers and fruits.

It is found in the nucleus. In terms of biological role, regulates vegetative and gynoecium development. In concert with HUA2, antagonizes FLK by positively regulating FLC probably at transcriptional and post-transcriptional levels, and thus acts as a negative regulator of flowering. The polypeptide is RNA-binding KH domain-containing protein PEPPER (Arabidopsis thaliana (Mouse-ear cress)).